Reading from the N-terminus, the 375-residue chain is Serpentine receptor class alpha-39 (375 aa).

The next 7 helical transmembrane spans lie at 17 to 37 (LFAI…LFII), 51 to 71 (LVFL…LTAW), 99 to 119 (IRGT…GILL), 138 to 158 (LGTI…FILL), 183 to 203 (VYVM…VHLV), 236 to 256 (TPLL…VSVF), and 275 to 295 (LFIM…ELWL).

This sequence belongs to the nematode receptor-like protein sra family.

It localises to the membrane. The protein is Serpentine receptor class alpha-39 (sra-39) of Caenorhabditis elegans.